A 405-amino-acid polypeptide reads, in one-letter code: Imidazolonepropionase (405 aa).

Fe(3+) is bound by residues H73 and H75. Zn(2+) contacts are provided by H73 and H75. R82, Y145, and H178 together coordinate 4-imidazolone-5-propanoate. Y145 is a binding site for N-formimidoyl-L-glutamate. Residue H243 participates in Fe(3+) binding. A Zn(2+)-binding site is contributed by H243. Q246 contributes to the 4-imidazolone-5-propanoate binding site. D318 contributes to the Fe(3+) binding site. D318 provides a ligand contact to Zn(2+). N320 and G322 together coordinate N-formimidoyl-L-glutamate. Residue T323 coordinates 4-imidazolone-5-propanoate.

It belongs to the metallo-dependent hydrolases superfamily. HutI family. Zn(2+) serves as cofactor. The cofactor is Fe(3+).

It localises to the cytoplasm. It carries out the reaction 4-imidazolone-5-propanoate + H2O = N-formimidoyl-L-glutamate. Its pathway is amino-acid degradation; L-histidine degradation into L-glutamate; N-formimidoyl-L-glutamate from L-histidine: step 3/3. Catalyzes the hydrolytic cleavage of the carbon-nitrogen bond in imidazolone-5-propanoate to yield N-formimidoyl-L-glutamate. It is the third step in the universal histidine degradation pathway. This is Imidazolonepropionase from Brucella abortus (strain S19).